A 445-amino-acid chain; its full sequence is GRAM domain-containing protein 2B (445 aa).

Position 1 is an N-acetylmethionine (Met1). The disordered stretch occupies residues 1–118 (MVKKRLSSSD…ERKKSSSSSQ (118 aa)). 2 stretches are compositionally biased toward polar residues: residues 18 to 44 (PSNS…SSEA) and 56 to 68 (KSPT…SSVE). Residues 82–93 (SKSSFDGSSLLS) are compositionally biased toward low complexity. Positions 94–112 (DKNDCKTESKTDSKTERKK) are enriched in basic and acidic residues. Positions 123–190 (MHFHKLFLDV…FSVTLIKKTK (68 aa)) constitute a GRAM domain. Positions 233 to 246 (TSVGNSPNPSSAEN) are enriched in polar residues. A disordered region spans residues 233–252 (TSVGNSPNPSSAENSFRADR). Ser238, Ser255, and Ser265 each carry phosphoserine. The interval 277–331 (DLEGYSSSGSQTPESENSRDFHVTESQTVLNVTKGETKPPRTDAHGSRAPDGKAK) is disordered. The segment covering 281-291 (YSSSGSQTPES) has biased composition (polar residues). Residues 311-330 (GETKPPRTDAHGSRAPDGKA) are compositionally biased toward basic and acidic residues.

The chain is GRAM domain-containing protein 2B (Gramd2b) from Mus musculus (Mouse).